The primary structure comprises 373 residues: 2-oxoglutarate oxidoreductase subunit KorB (373 aa).

The interval 26-50 is disordered; that stretch reads TPSLTKNAGVPTTDQPQKGKDFTSD. Residues 27 to 41 show a composition bias toward polar residues; sequence PSLTKNAGVPTTDQP.

KG oxidoreductase (KOR) is composed of KorA and KorB subunits. Mg(2+) serves as cofactor.

The enzyme catalyses 2 oxidized [2Fe-2S]-[ferredoxin] + 2-oxoglutarate + CoA = succinyl-CoA + 2 reduced [2Fe-2S]-[ferredoxin] + CO2 + H(+). The protein operates within carbohydrate metabolism; tricarboxylic acid cycle. Component of KG oxidoreductase (KOR) that catalyzes the CoA-dependent oxidative decarboxylation of 2-oxoglutarate (alpha-ketoglutarate, KG) to succinyl-CoA. Methyl viologen can act as electron acceptor in vitro; the physiologic electron acceptor is unknown. Is involved in the alternative TCA pathway that functions concurrently with fatty acid beta-oxidation. Since a growing body of evidence indicates that lipids (for example cholesterol and fatty acids) are a predominant growth substrate for M.tuberculosis during infection, flux through KOR likely represents an important step in intermediary metabolism in vivo. KOR-dependent decarboxylation of KG also appears to be an important source of CO(2) in M.tuberculosis metabolism. This Mycobacterium tuberculosis (strain ATCC 25618 / H37Rv) protein is 2-oxoglutarate oxidoreductase subunit KorB (korB).